The primary structure comprises 183 residues: UPF0316 protein BcerKBAB4_3093 (183 aa).

Helical transmembrane passes span 6-26 (LIFV…ILLV), 32-52 (SAAG…GIVF), and 58-78 (WMNI…GGYI).

It belongs to the UPF0316 family.

The protein resides in the cell membrane. The protein is UPF0316 protein BcerKBAB4_3093 of Bacillus mycoides (strain KBAB4) (Bacillus weihenstephanensis).